Reading from the N-terminus, the 338-residue chain is GTP 3',8-cyclase (338 aa).

In terms of domain architecture, Radical SAM core spans 8-227 (KLQRPLKDLR…DMIHQVMPLE (220 aa)). Residue arginine 17 participates in GTP binding. The [4Fe-4S] cluster site is built by cysteine 24 and cysteine 28. S-adenosyl-L-methionine is bound at residue tyrosine 30. Cysteine 31 lines the [4Fe-4S] cluster pocket. Arginine 71 is a binding site for GTP. Glycine 75 lines the S-adenosyl-L-methionine pocket. Residue threonine 102 coordinates GTP. Serine 126 lines the S-adenosyl-L-methionine pocket. Lysine 163 contributes to the GTP binding site. Methionine 197 is an S-adenosyl-L-methionine binding site. Residues cysteine 261 and cysteine 264 each coordinate [4Fe-4S] cluster. Position 266–268 (266–268 (RAR)) interacts with GTP. Position 278 (cysteine 278) interacts with [4Fe-4S] cluster.

The protein belongs to the radical SAM superfamily. MoaA family. In terms of assembly, monomer and homodimer. The cofactor is [4Fe-4S] cluster.

The catalysed reaction is GTP + AH2 + S-adenosyl-L-methionine = (8S)-3',8-cyclo-7,8-dihydroguanosine 5'-triphosphate + 5'-deoxyadenosine + L-methionine + A + H(+). Its pathway is cofactor biosynthesis; molybdopterin biosynthesis. In terms of biological role, catalyzes the cyclization of GTP to (8S)-3',8-cyclo-7,8-dihydroguanosine 5'-triphosphate. In Bacillus anthracis (strain CDC 684 / NRRL 3495), this protein is GTP 3',8-cyclase.